A 903-amino-acid polypeptide reads, in one-letter code: MENPQKAGPLLRDLTRAFSHYNKHNLLLKKNLKETIAFFREIRQNHSNTCSTSGPELDSGQLRCISFPRHDEDHLQKVVGCAPYILILGQDCSARYQLLNCMLGERLLPLGSDAGGACGVEGGACRRRKLCFTHGRQTRLSLALPGQYELVHQLAAHCGRWDTVPREDLEIQECEDPAQRLAELEITLHHALLQEAKIMVLPCRNVQPVEEALEDCRRGILPIILYAVSKATLSADQLSELQKVRETLPYPVCFVRIPTEPAPDPPGQRSALFAQLVSQELIGGAAGNCACGAPAQTPGKMQGILGEDLERLHRVLVPFARQVLQSQQVEATTLLNAVHCRCLDLFINQAFDMQRDLQITPRRLEYTREKEGELYSSLMAIANRKQEEMKEMIVETLESMKEQLLEDAANLEFTDIIMTSNSEPMSSKDIKVCISQIQDLIVIRLNQAVANKLTSSVDYLRESFVGTLERCLCSLEKSTGEPCAHNVTSNHLKQILNAAYHVEVTFHSGSSVTRLFWEQIKQIIHRISWVNPPSVTSEWKRKVAQDAIESLSAAKLAKSICSQFRTRLNSSHEAFASSLRQLEEGHTGRLERTEDLWLRVRKDHAPRLARLSLESRSLRDILLHGKPKLGRELGRGQYGVVYLCDNWAGRHPCALKSVVPPDDKHWNDLALEFHYTRSLPKHERLVNLHGSVIDHSYGGGSSIAVLLIMERLHRDLYTGLKAGLVLKERLQIALDVVEGIRFLHGQGLLHRDIKLKNVLLDKQNRAKITDLGFCKPEAMMSGSIVGTPIHMAPELFTGKYDNSVDVYAFGILFWYLCTGSVKLPEAFERCSSKDQLWTNVKKGSRPERLASFDEECWQLMEACWNGDPSQRPLLGIVQPSLQSIMDRLCNDSDQKSGNLEDSN.

A coiled-coil region spans residues 382 to 414; the sequence is ANRKQEEMKEMIVETLESMKEQLLEDAANLEFT. A Protein kinase domain is found at 627–881; that stretch reads PKLGRELGRG…PLLGIVQPSL (255 aa). Residues 633–641 and lysine 656 each bind ATP; that span reads LGRGQYGVV. The active-site Proton acceptor is aspartate 752.

This sequence belongs to the protein kinase superfamily. Ser/Thr protein kinase family.

It is found in the cytoplasm. It localises to the cell membrane. Its subcellular location is the apical cell membrane. The protein resides in the basolateral cell membrane. The protein localises to the cell junction. The catalysed reaction is L-seryl-[protein] + ATP = O-phospho-L-seryl-[protein] + ADP + H(+). It catalyses the reaction L-threonyl-[protein] + ATP = O-phospho-L-threonyl-[protein] + ADP + H(+). It carries out the reaction L-tyrosyl-[protein] + ATP = O-phospho-L-tyrosyl-[protein] + ADP + H(+). Functionally, may act as a positive regulator of ERK phosphorylation downstream of fibroblast growth factor-receptor activation. May induce both caspase-dependent apoptosis and caspase-independent cell death. May play a role in the embryonic development. This is Dual serine/threonine and tyrosine protein kinase from Pimephales promelas (Fathead minnow).